Reading from the N-terminus, the 218-residue chain is N-(5'-phosphoribosyl)anthranilate isomerase (218 aa).

The protein belongs to the TrpF family.

The catalysed reaction is N-(5-phospho-beta-D-ribosyl)anthranilate = 1-(2-carboxyphenylamino)-1-deoxy-D-ribulose 5-phosphate. It functions in the pathway amino-acid biosynthesis; L-tryptophan biosynthesis; L-tryptophan from chorismate: step 3/5. The protein is N-(5'-phosphoribosyl)anthranilate isomerase of Bacillus licheniformis (strain ATCC 14580 / DSM 13 / JCM 2505 / CCUG 7422 / NBRC 12200 / NCIMB 9375 / NCTC 10341 / NRRL NRS-1264 / Gibson 46).